A 905-amino-acid polypeptide reads, in one-letter code: Probable aromatic-L-amino-acid decarboxylase (905 aa).

Residues Tyr-250–Glu-296 are disordered. The span at Lys-280–Glu-296 shows a compositional bias: basic and acidic residues. Residues Thr-492 and Ser-591 each contribute to the pyridoxal 5'-phosphate site. Lys-648 is subject to N6-(pyridoxal phosphate)lysine. Residues His-861–Arg-905 form a disordered region. Polar residues predominate over residues Pro-889–Asp-898.

The protein belongs to the group II decarboxylase family. In terms of assembly, homodimer. The cofactor is pyridoxal 5'-phosphate.

It carries out the reaction L-dopa + H(+) = dopamine + CO2. The catalysed reaction is 5-hydroxy-L-tryptophan + H(+) = serotonin + CO2. It functions in the pathway catecholamine biosynthesis; dopamine biosynthesis; dopamine from L-tyrosine: step 2/2. Functionally, catalyzes the decarboxylation of L-3,4-dihydroxyphenylalanine (DOPA) to dopamine, L-5-hydroxytryptophan to serotonin and L-tryptophan to tryptamine. This Caenorhabditis elegans protein is Probable aromatic-L-amino-acid decarboxylase (hdl-1).